The chain runs to 254 residues: Vitamin B12 import ATP-binding protein BtuD (254 aa).

The region spanning Ile3–Pro239 is the ABC transporter domain. Gly29–Ser36 contributes to the ATP binding site.

The protein belongs to the ABC transporter superfamily. Vitamin B12 importer (TC 3.A.1.13.1) family. The complex is composed of two ATP-binding proteins (BtuD), two transmembrane proteins (BtuC) and a solute-binding protein (BtuF).

It is found in the cell inner membrane. It catalyses the reaction an R-cob(III)alamin(out) + ATP + H2O = an R-cob(III)alamin(in) + ADP + phosphate + H(+). In terms of biological role, part of the ABC transporter complex BtuCDF involved in vitamin B12 import. Responsible for energy coupling to the transport system. In Vibrio vulnificus (strain CMCP6), this protein is Vitamin B12 import ATP-binding protein BtuD.